The following is a 138-amino-acid chain: Thyrotropin subunit beta (138 aa).

Positions 1–20 are cleaved as a signal peptide; it reads MTAIYLMSMLFGLACGQAMS. 6 disulfide bridges follow: cysteine 22–cysteine 72, cysteine 36–cysteine 87, cysteine 39–cysteine 125, cysteine 47–cysteine 103, cysteine 51–cysteine 105, and cysteine 108–cysteine 115. N-linked (GlcNAc...) asparagine glycosylation occurs at asparagine 43. Positions 133 to 138 are excised as a propeptide; the sequence is VVGFSI.

The protein belongs to the glycoprotein hormones subunit beta family. As to quaternary structure, heterodimer of a common alpha chain and a unique beta chain which confers biological specificity to thyrotropin, lutropin, follitropin and gonadotropin.

The protein resides in the secreted. Functionally, indispensable for the control of thyroid structure and metabolism. The protein is Thyrotropin subunit beta (TSHB) of Canis lupus familiaris (Dog).